Consider the following 239-residue polypeptide: Probable transcriptional regulatory protein Veis_4238 (239 aa).

The interval M1–G22 is disordered.

It belongs to the TACO1 family.

It is found in the cytoplasm. The polypeptide is Probable transcriptional regulatory protein Veis_4238 (Verminephrobacter eiseniae (strain EF01-2)).